Consider the following 453-residue polypeptide: Tubulin delta chain (453 aa).

Residue 143-149 (AGGTGSG) participates in GTP binding.

It belongs to the tubulin family. In terms of assembly, found in a complex with TEDC1, TEDC2, TUBE1 and TUBD1.

The protein resides in the nucleus. It localises to the cytoplasm. It is found in the cytoskeleton. The protein localises to the microtubule organizing center. Its subcellular location is the centrosome. The protein resides in the centriole. It localises to the cell projection. It is found in the cilium. Functionally, acts as a positive regulator of hedgehog signaling and regulates ciliary function. This Macaca fascicularis (Crab-eating macaque) protein is Tubulin delta chain (TUBD1).